A 280-amino-acid chain; its full sequence is MHSLQRKVLRTICPDQKGLIARITNICYKHELNIVQNNEFVDHRTGRFFMRTELEGIFNDSTLLADLDSALPEGSVRELNPAGRRRIVILVTKEAHCLGDLLMKANYGGLDVEIAAVIGNHDTLRSLVERFDIPFELVSHEGLTRNEHDQKMADAIDAYQPDYVVLAKYMRVLTPEFVARFPNKIINIHHSFLPAFIGARPYHQAYERGVKIIGATAHYVNDNLDEGPIIMQDVIHVDHTYTAEDMMRAGRDVEKNVLSRALYKVLAQRVFVYGNRTIIL.

An ACT domain is found at 8 to 86 (VLRTICPDQK…RELNPAGRRR (79 aa)). Residue Asp-225 is part of the active site.

This sequence belongs to the PurU family. Homohexamer.

The enzyme catalyses (6R)-10-formyltetrahydrofolate + H2O = (6S)-5,6,7,8-tetrahydrofolate + formate + H(+). The protein operates within purine metabolism; IMP biosynthesis via de novo pathway; formate from 10-formyl-5,6,7,8-tetrahydrofolate: step 1/1. Its activity is regulated as follows. Activated by methionine, inhibited by glycine. Its function is as follows. Catalyzes the hydrolysis of 10-formyltetrahydrofolate (formyl-FH4) to formate and tetrahydrofolate (FH4). Provides the major source of formate for the PurT-dependent synthesis of 5'-phosphoribosyl-N-formylglycinamide (FGAR) during aerobic growth. Has a role in regulating the one-carbon pool. This chain is Formyltetrahydrofolate deformylase, found in Escherichia coli (strain K12).